Reading from the N-terminus, the 229-residue chain is 5'-methylthioadenosine/S-adenosylhomocysteine nucleosidase (229 aa).

Glutamate 12 functions as the Proton acceptor in the catalytic mechanism. Residues glycine 78, isoleucine 152, and 173–174 (ME) contribute to the substrate site. Catalysis depends on aspartate 197, which acts as the Proton donor.

The protein belongs to the PNP/UDP phosphorylase family. MtnN subfamily.

The enzyme catalyses S-adenosyl-L-homocysteine + H2O = S-(5-deoxy-D-ribos-5-yl)-L-homocysteine + adenine. The catalysed reaction is S-methyl-5'-thioadenosine + H2O = 5-(methylsulfanyl)-D-ribose + adenine. It catalyses the reaction 5'-deoxyadenosine + H2O = 5-deoxy-D-ribose + adenine. The protein operates within amino-acid biosynthesis; L-methionine biosynthesis via salvage pathway; S-methyl-5-thio-alpha-D-ribose 1-phosphate from S-methyl-5'-thioadenosine (hydrolase route): step 1/2. In terms of biological role, catalyzes the irreversible cleavage of the glycosidic bond in both 5'-methylthioadenosine (MTA) and S-adenosylhomocysteine (SAH/AdoHcy) to adenine and the corresponding thioribose, 5'-methylthioribose and S-ribosylhomocysteine, respectively. Also cleaves 5'-deoxyadenosine, a toxic by-product of radical S-adenosylmethionine (SAM) enzymes, into 5-deoxyribose and adenine. In Baumannia cicadellinicola subsp. Homalodisca coagulata, this protein is 5'-methylthioadenosine/S-adenosylhomocysteine nucleosidase.